A 78-amino-acid chain; its full sequence is RNA-binding protein KhpA (78 aa).

Positions 29-78 (TIIYELTVAKPDIGKIIGKEGRTIKAIRTLLVSVASRNNVKVSLEIMEDK) constitute a KH domain.

It belongs to the KhpA RNA-binding protein family.

It localises to the cytoplasm. In terms of biological role, a probable RNA-binding protein. This chain is RNA-binding protein KhpA, found in Chlamydia caviae (strain ATCC VR-813 / DSM 19441 / 03DC25 / GPIC) (Chlamydophila caviae).